The sequence spans 501 residues: Phenylalanine--tRNA ligase alpha subunit (501 aa).

Residues Thr-340 and Phe-423 each coordinate L-phenylalanine. Glu-425 is a binding site for Mg(2+). L-phenylalanine is bound at residue Phe-448.

The protein belongs to the class-II aminoacyl-tRNA synthetase family. Phe-tRNA synthetase alpha subunit type 2 subfamily. Tetramer of two alpha and two beta subunits. It depends on Mg(2+) as a cofactor.

Its subcellular location is the cytoplasm. It catalyses the reaction tRNA(Phe) + L-phenylalanine + ATP = L-phenylalanyl-tRNA(Phe) + AMP + diphosphate + H(+). The chain is Phenylalanine--tRNA ligase alpha subunit from Methanococcus maripaludis (strain C5 / ATCC BAA-1333).